Here is a 99-residue protein sequence, read N- to C-terminus: Nucleoid-associated protein SSA_0326 (99 aa).

A compositionally biased stretch (low complexity) spans Met1–Gln15. The tract at residues Met1 to Ala23 is disordered.

It belongs to the YbaB/EbfC family. As to quaternary structure, homodimer.

The protein resides in the cytoplasm. Its subcellular location is the nucleoid. In terms of biological role, binds to DNA and alters its conformation. May be involved in regulation of gene expression, nucleoid organization and DNA protection. The chain is Nucleoid-associated protein SSA_0326 from Streptococcus sanguinis (strain SK36).